The primary structure comprises 520 residues: Maturase K (520 aa).

This sequence belongs to the intron maturase 2 family. MatK subfamily.

The protein resides in the plastid. It localises to the chloroplast. Usually encoded in the trnK tRNA gene intron. Probably assists in splicing its own and other chloroplast group II introns. The chain is Maturase K from Cycas taitungensis (Prince sago).